Consider the following 58-residue polypeptide: DNA-directed RNA polymerases I, II, and III subunit RPABC4 (58 aa).

Residues C19, C22, C36, and C39 each coordinate Zn(2+). The C4-type zinc-finger motif lies at 19 to 39; that stretch reads CGECHTENEIKSRDPIRCREC.

Belongs to the archaeal Rpo12/eukaryotic RPC10 RNA polymerase subunit family. Component of the RNA polymerase I (Pol I), RNA polymerase II (Pol II) and RNA polymerase III (Pol III) complexes consisting of at least 13, 12 and 17 subunits, respectively. Pol I complex consists of a ten-subunit catalytic core composed of POLR1A/RPA1, POLR1B/RPA2, POLR1C/RPAC1, POLR1D/RPAC2, POLR1H/RPA12, POLR2E/RPABC1, POLR2F/RPABC2, POLR2H/RPABC3, POLR2K/RPABC4 and POLR2L/RPABC5; a mobile stalk subunit POLR1F/RPA43 protruding from the core and additional subunits homologous to general transcription factors POLR1E/RPA49 and POLR1G/RPA34. Part of Pol I pre-initiation complex (PIC), in which Pol I core assembles with RRN3 and promoter-bound UTBF and SL1/TIF-IB complex. Pol II complex contains a ten-subunit catalytic core composed of POLR2A/RPB1, POLR2B/RPB2, POLR2C/RPB3, POLR2I/RPB9, POLR2J/RPB11, POLR2E/RPABC1, POLR2F/RPABC2, POLR2H/RPABC3, POLR2K/RPABC4 and POLR2L/RPABC5 and a mobile stalk composed of two subunits POLR2D/RPB4 and POLR2G/RPB7. Part of Pol II(G) complex, in which Pol II core associates with an additional subunit POLR2M; unlike conventional Pol II, Pol II(G) functions as a transcriptional repressor. Part of TBP-based Pol II pre-initiation complex (PIC), in which Pol II core assembles with general transcription factors and other specific initiation factors including GTF2E1, GTF2E2, GTF2F1, GTF2F2, TCEA1, ERCC2, ERCC3, GTF2H2, GTF2H3, GTF2H4, GTF2H5, GTF2A1, GTF2A2, GTF2B and TBP; this large multi-subunit PIC complex mediates DNA unwinding and targets Pol II core to the transcription start site where the first phosphodiester bond forms. Pol III complex consists of a ten-subunit catalytic core composed of POLR3A/RPC1, POLR3B/RPC2, POLR1C/RPAC1, POLR1D/RPAC2, POLR3K/RPC10, POLR2E/RPABC1, POLR2F/RPABC2, POLR2H/RPABC3, POLR2K/RPABC4 and POLR2L/RPABC5; a mobile stalk composed of two subunits POLR3H/RPC8 and CRCP/RPC9, protruding from the core and functioning primarily in transcription initiation; and additional subunits homologous to general transcription factors of the RNA polymerase II machinery, POLR3C/RPC3-POLR3F/RPC6-POLR3G/RPC7 heterotrimer required for transcription initiation and POLR3D/RPC4-POLR3E/RPC5 heterodimer involved in both transcription initiation and termination.

The protein resides in the nucleus. The protein localises to the nucleolus. Functionally, DNA-dependent RNA polymerase catalyzes the transcription of DNA into RNA using the four ribonucleoside triphosphates as substrates. Common component of RNA polymerases I, II and III which synthesize ribosomal RNA precursors, mRNA precursors and many functional non-coding RNAs, and a small RNAs, such as 5S rRNA and tRNAs, respectively. This chain is DNA-directed RNA polymerases I, II, and III subunit RPABC4 (Polr2k), found in Mus musculus (Mouse).